The following is a 197-amino-acid chain: Xanthine phosphoribosyltransferase (197 aa).

Positions 20 and 27 each coordinate xanthine. 5-phospho-alpha-D-ribose 1-diphosphate is bound at residue 128–132; the sequence is ANGQA. Lys-156 is a binding site for xanthine.

The protein belongs to the purine/pyrimidine phosphoribosyltransferase family. Xpt subfamily. In terms of assembly, homodimer.

The protein localises to the cytoplasm. It catalyses the reaction XMP + diphosphate = xanthine + 5-phospho-alpha-D-ribose 1-diphosphate. The protein operates within purine metabolism; XMP biosynthesis via salvage pathway; XMP from xanthine: step 1/1. Its function is as follows. Converts the preformed base xanthine, a product of nucleic acid breakdown, to xanthosine 5'-monophosphate (XMP), so it can be reused for RNA or DNA synthesis. This Bacillus anthracis (strain A0248) protein is Xanthine phosphoribosyltransferase.